A 285-amino-acid polypeptide reads, in one-letter code: Probable endonuclease 4 (285 aa).

Zn(2+)-binding residues include His-69, His-109, Glu-145, Asp-179, His-182, His-216, Asp-229, His-231, and Glu-261.

This sequence belongs to the AP endonuclease 2 family. It depends on Zn(2+) as a cofactor.

It carries out the reaction Endonucleolytic cleavage to 5'-phosphooligonucleotide end-products.. Its function is as follows. Endonuclease IV plays a role in DNA repair. It cleaves phosphodiester bonds at apurinic or apyrimidinic (AP) sites, generating a 3'-hydroxyl group and a 5'-terminal sugar phosphate. The sequence is that of Probable endonuclease 4 from Salmonella newport (strain SL254).